The chain runs to 209 residues: Putative 3-methyladenine DNA glycosylase (209 aa).

The protein belongs to the DNA glycosylase MPG family.

The protein is Putative 3-methyladenine DNA glycosylase of Deinococcus geothermalis (strain DSM 11300 / CIP 105573 / AG-3a).